Here is a 197-residue protein sequence, read N- to C-terminus: Class A basic helix-loop-helix protein 15 (197 aa).

The span at 1–12 (MKTKNRPPRRRT) shows a compositional bias: basic residues. Disordered regions lie at residues 1–82 (MKTK…ERER) and 175–197 (TEDQ…REGS). A phosphothreonine mark is found at Thr12 and Thr25. Residues 27–36 (DRSQSGSGAS) are compositionally biased toward polar residues. Residues 65–82 (SRRENSVQRRLESNERER) show a composition bias toward basic and acidic residues. One can recognise a bHLH domain in the interval 72–124 (QRRLESNERERQRMHKLNNAFQALREVIPHVRADKKLSKIETLTLAKNYIKSL).

Forms homodimers or heterodimers with TCF3 gene products E12 and E47. These dimers bind to the E-box site, however, heterodimer with MYOD1 does not bind target DNA. In terms of tissue distribution, expressed in liver, spleen and olfactory epithelium. Weaker expression is seen in skeletal muscle, cardiac muscle, eye and brain tissue.

It is found in the nucleus. Plays a role in controlling the transcriptional activity of MyoD, ensuring that expanding myoblast populations remain undifferentiated. Repression may occur through muscle-specific E-box occupancy by homodimers. May also negatively regulate bHLH-mediated transcription through an N-terminal repressor domain. Serves as a key regulator of acinar cell function, stability, and identity. Also required for normal organelle localization in exocrine cells and for mitochondrial calcium ion transport. May function as a unique regulator of gene expression in several different embryonic and postnatal cell lineages. Binds to the E-box consensus sequence 5'-CANNTG-3'. This Rattus norvegicus (Rat) protein is Class A basic helix-loop-helix protein 15 (Bhlha15).